The sequence spans 84 residues: Small ribosomal subunit protein uS17 (84 aa).

Belongs to the universal ribosomal protein uS17 family. Part of the 30S ribosomal subunit.

Its function is as follows. One of the primary rRNA binding proteins, it binds specifically to the 5'-end of 16S ribosomal RNA. This Clostridioides difficile (strain 630) (Peptoclostridium difficile) protein is Small ribosomal subunit protein uS17.